We begin with the raw amino-acid sequence, 405 residues long: SPbeta prophage-derived uncharacterized protein YonJ (405 aa).

The stretch at 72 to 101 (DESNNSLLELELKKVEIMEERKKLQAVKHE) forms a coiled coil.

The chain is SPbeta prophage-derived uncharacterized protein YonJ (yonJ) from Bacillus subtilis (strain 168).